Reading from the N-terminus, the 162-residue chain is Lipoprotein signal peptidase (162 aa).

The next 4 helical transmembrane spans lie at 12–32 (WFALAALVIVLDQISKLYFNS), 42–62 (VVEGFFNFTLVYNPGAAFSFL), 66–86 (GGWQKYLFTILAFAVSGWLGW), and 93–113 (FSGLMNLAAAFIMGGALGNVI). Residues D123 and D142 contribute to the active site. Residues 133–153 (WYYPAFNLADSFICVGAALMV) traverse the membrane as a helical segment.

It belongs to the peptidase A8 family.

The protein resides in the cell inner membrane. The catalysed reaction is Release of signal peptides from bacterial membrane prolipoproteins. Hydrolyzes -Xaa-Yaa-Zaa-|-(S,diacylglyceryl)Cys-, in which Xaa is hydrophobic (preferably Leu), and Yaa (Ala or Ser) and Zaa (Gly or Ala) have small, neutral side chains.. Its pathway is protein modification; lipoprotein biosynthesis (signal peptide cleavage). Functionally, this protein specifically catalyzes the removal of signal peptides from prolipoproteins. This Chromobacterium violaceum (strain ATCC 12472 / DSM 30191 / JCM 1249 / CCUG 213 / NBRC 12614 / NCIMB 9131 / NCTC 9757 / MK) protein is Lipoprotein signal peptidase.